The primary structure comprises 595 residues: O-phosphoseryl-tRNA(Sec) selenium transferase (595 aa).

Position 75 (Arg-75) interacts with pyridoxal 5'-phosphate. The tract at residues 96-106 (GRSGDLFSEQP) is phosphate loop (P-loop). Substrate-binding residues include Arg-97, Ser-98, and Gln-105. Residues 174–187 (RTVTKDSTSATSAA) show a composition bias toward polar residues. 2 disordered regions span residues 174–208 (RTVT…TSLP) and 257–278 (STNR…TPTS). A compositionally biased stretch (basic and acidic residues) spans 196 to 205 (EADRDRHDRT). Residue Arg-358 coordinates tRNA. An N6-(pyridoxal phosphate)lysine modification is found at Lys-371. Arg-400 contributes to the substrate binding site.

Belongs to the SepSecS family. In terms of assembly, homotetramer composed of two homodimers. Pyridoxal 5'-phosphate serves as cofactor.

It localises to the cytoplasm. The enzyme catalyses O-phospho-L-seryl-tRNA(Sec) + selenophosphate + H2O = L-selenocysteinyl-tRNA(Sec) + 2 phosphate. It participates in aminoacyl-tRNA biosynthesis; selenocysteinyl-tRNA(Sec) biosynthesis; selenocysteinyl-tRNA(Sec) from L-seryl-tRNA(Sec) (archaeal/eukaryal route): step 2/2. Functionally, converts O-phosphoseryl-tRNA(Sec) to selenocysteinyl-tRNA(Sec) required for selenoprotein biosynthesis. The chain is O-phosphoseryl-tRNA(Sec) selenium transferase from Leishmania donovani.